The primary structure comprises 108 residues: UPF0145 protein THA_1434 (108 aa).

The protein belongs to the UPF0145 family.

This Thermosipho africanus (strain TCF52B) protein is UPF0145 protein THA_1434.